A 476-amino-acid polypeptide reads, in one-letter code: ATP synthase subunit beta (476 aa).

Position 158–165 (158–165) interacts with ATP; it reads GGAGVGKT.

This sequence belongs to the ATPase alpha/beta chains family. As to quaternary structure, F-type ATPases have 2 components, CF(1) - the catalytic core - and CF(0) - the membrane proton channel. CF(1) has five subunits: alpha(3), beta(3), gamma(1), delta(1), epsilon(1). CF(0) has three main subunits: a(1), b(2) and c(9-12). The alpha and beta chains form an alternating ring which encloses part of the gamma chain. CF(1) is attached to CF(0) by a central stalk formed by the gamma and epsilon chains, while a peripheral stalk is formed by the delta and b chains.

The protein localises to the cell inner membrane. The enzyme catalyses ATP + H2O + 4 H(+)(in) = ADP + phosphate + 5 H(+)(out). Functionally, produces ATP from ADP in the presence of a proton gradient across the membrane. The catalytic sites are hosted primarily by the beta subunits. In Paracidovorax citrulli (strain AAC00-1) (Acidovorax citrulli), this protein is ATP synthase subunit beta.